A 113-amino-acid chain; its full sequence is Protein translation factor SUI1 homolog (113 aa).

Residues 1 to 24 (MSELDSQVPTAFDPFADANAEDSG) are disordered. Ser-2 carries the N-acetylserine modification.

This sequence belongs to the SUI1 family.

In terms of biological role, probably involved in translation. In Brassica oleracea (Wild cabbage), this protein is Protein translation factor SUI1 homolog.